Here is a 190-residue protein sequence, read N- to C-terminus: Ion-translocating oxidoreductase complex subunit B (190 aa).

The tract at residues 1 to 26 is hydrophobic; it reads MLTFWLAVATLSALALVAGAVLGFAA. Residues 32–90 form the 4Fe-4S domain; it reads KTDPVAERIDALLPQSQCAQCGYPGCRPYAEAVAGGAPINKCVPGGEAVMLKIAAQLSV. [4Fe-4S] cluster is bound by residues Cys-49, Cys-52, Cys-57, Cys-73, Cys-115, Cys-118, Cys-121, Cys-125, Cys-145, Cys-148, Cys-151, and Cys-155. 4Fe-4S ferredoxin-type domains lie at 106 to 135 and 136 to 165; these read RVAW…GATR and AVHT…MRPL.

It belongs to the 4Fe4S bacterial-type ferredoxin family. RnfB subfamily. The complex is composed of six subunits: RnfA, RnfB, RnfC, RnfD, RnfE and RnfG. It depends on [4Fe-4S] cluster as a cofactor.

The protein resides in the cell inner membrane. Its function is as follows. Part of a membrane-bound complex that couples electron transfer with translocation of ions across the membrane. The sequence is that of Ion-translocating oxidoreductase complex subunit B from Sodalis glossinidius (strain morsitans).